The primary structure comprises 577 residues: MTSKVGAVATKTYREKLGPEILEVFDKSYKSFTDVQVLAGTHLLNLSDVVVESPTGSGKTLAFVLPMMRMIQNARLQPNEIGALILSPSRELCSQIVNVIKPFAEKMKLNVETVTGGQKVDKNIKMFKNKDINILVATPGRLFQIIQHEKTMIARAMKGVQLLVIDEADRFNEIQFEDHMREILSCIPKQRRTGLFSATQVKEEDDLMVFGLRNAKQVKVSQERNSAAPSTLKNYFVECPADEKTSVCLEFIRQRTDKKVLIFFPSCNSVRYFHKIFERCLTKRPLFAVHGKCSNPHRAAQIKAFSESTNGVMISTDVMARGIDITDIDWVIQYDLPKHSSWFVHRAGRTARCGRDGNALILIATEQLAYVSFLDNHEKVKLEEVKVPTSTSRKAEELRQKMIKIQVSDRAILELGTRAFVSHIESYAKHDCHLICSLDDLNVVGLANSYALLRLPKMRELAQRKDLNQFDRSDIETSEIKYADPKLEANRDTVMKEKHEKKIETLAAKEKKRREKEARKMKRAGGRFKSRATGANAEEKRAKKRKSEEEDDAQNDIRLLKKIKRGKLSKKEIKDVL.

The Q motif motif lies at 7-37 (AVATKTYREKLGPEILEVFDKSYKSFTDVQV). The Helicase ATP-binding domain occupies 40 to 218 (GTHLLNLSDV…VFGLRNAKQV (179 aa)). 53–60 (SPTGSGKT) lines the ATP pocket. The DEAD box motif lies at 166-169 (DEAD). The Helicase C-terminal domain maps to 231-393 (TLKNYFVECP…EVKVPTSTSR (163 aa)). A disordered region spans residues 508-577 (AKEKKRREKE…LSKKEIKDVL (70 aa)). Residues 510-530 (EKKRREKEARKMKRAGGRFKS) are compositionally biased toward basic residues.

This sequence belongs to the DEAD box helicase family. DDX55/SPB4 subfamily.

It carries out the reaction ATP + H2O = ADP + phosphate + H(+). Functionally, probable ATP-binding RNA helicase. The polypeptide is Probable ATP-dependent RNA helicase DDX55 homolog (Caenorhabditis briggsae).